The sequence spans 383 residues: Serine protease 23 (383 aa).

The N-terminal stretch at 1 to 23 is a signal peptide; sequence MAGIPGLLILLLVLLCVFMQVSP. N-linked (GlcNAc...) asparagine glycosylation is present at Asn93. Cys160 and Cys176 are joined by a disulfide. His175 acts as the Charge relay system in catalysis. Asn207 carries an N-linked (GlcNAc...) asparagine glycan. Active-site charge relay system residues include Asp240 and Ser316.

Belongs to the peptidase S1 family.

Its subcellular location is the secreted. This chain is Serine protease 23 (Prss23), found in Rattus norvegicus (Rat).